Reading from the N-terminus, the 313-residue chain is Calcyphosin-2 (313 aa).

EF-hand domains are found at residues 144-179 (RILT…FHLE), 180-215 (VSEK…EMNE), and 216-251 (YRKS…KKHS). Asp193, Asn195, Asn197, Lys199, and Glu204 together coordinate Ca(2+).

The protein is Calcyphosin-2 (CAPS2) of Macaca fascicularis (Crab-eating macaque).